Consider the following 428-residue polypeptide: Kynureninase (428 aa).

Residues T104, T105, 132 to 135 (FPSD), D213, H216, and Y238 each bind pyridoxal 5'-phosphate. An N6-(pyridoxal phosphate)lysine modification is found at K239. Residues W267 and T295 each contribute to the pyridoxal 5'-phosphate site.

This sequence belongs to the kynureninase family. In terms of assembly, homodimer. Pyridoxal 5'-phosphate is required as a cofactor.

It catalyses the reaction L-kynurenine + H2O = anthranilate + L-alanine + H(+). It carries out the reaction 3-hydroxy-L-kynurenine + H2O = 3-hydroxyanthranilate + L-alanine + H(+). It participates in amino-acid degradation; L-kynurenine degradation; L-alanine and anthranilate from L-kynurenine: step 1/1. Its pathway is cofactor biosynthesis; NAD(+) biosynthesis; quinolinate from L-kynurenine: step 2/3. Its function is as follows. Catalyzes the cleavage of L-kynurenine (L-Kyn) and L-3-hydroxykynurenine (L-3OHKyn) into anthranilic acid (AA) and 3-hydroxyanthranilic acid (3-OHAA), respectively. The polypeptide is Kynureninase (Bacillus anthracis).